The primary structure comprises 282 residues: Transcription factor HES-1 (282 aa).

A disordered region spans residues 1 to 44; the sequence is MPADIMEKNSSSPVAATPASVNTTPDKPKTASEHRKSSKPIMEK. Residues 10-21 are compositionally biased toward low complexity; that stretch reads SSSPVAATPASV. The span at 26-35 shows a compositional bias: basic and acidic residues; that stretch reads DKPKTASEHR. One can recognise a bHLH domain in the interval 34–91; that stretch reads HRKSSKPIMEKRRRARINESLSQLKTLILDALKKDSSRHSKLEKADILEMTVKHLRNL. The region spanning 110–143 is the Orange domain; sequence YRAGFSECMNEVTRFLSTCEGVNTEVRTRLLGHL. Disordered stretches follow at residues 158–204 and 256–282; these read QAHP…GSAP and TSVG…PWRN. 2 stretches are compositionally biased toward pro residues: residues 164–174 and 182–202; these read QAPPPPPPSGP and FAPP…PPGS. Residues 264–275 show a composition bias toward low complexity; that stretch reads SPSSGSSLTSDS. Residues 277-280 carry the WRPW motif motif; that stretch reads WRPW.

Interacts with SIRT1. Transcription repression requires formation of a complex with a corepressor protein of the Groucho/TLE family. Interacts (via WPRW motif) with TLE1, and more weakly with TLE2. Interacts with HES6. Interacts with an FA complex, composed of FANCA, FANCF, FANCG and FANCL, but not of FANCC, nor FANCE. As to expression, expressed at high levels in undifferentiated neural precursor cells, but the level of expression decreases as neural differentiation proceeds.

The protein localises to the nucleus. Transcriptional repressor of genes that require a bHLH protein for their transcription. May act as a negative regulator of myogenesis by inhibiting the functions of MYOD1 and ASH1. Binds DNA on N-box motifs: 5'-CACNAG-3' with high affinity and on E-box motifs: 5'-CANNTG-3' with low affinity. May play a role in a functional FA core complex response to DNA cross-link damage, being required for the stability and nuclear localization of FA core complex proteins, as well as for FANCD2 monoubiquitination in response to DNA damage. The protein is Transcription factor HES-1 (Hes1) of Mus musculus (Mouse).